The primary structure comprises 113 residues: Carboxysome shell protein CcmK1 (113 aa).

The BMC domain occupies 4 to 90; sequence AVGMIETLGF…PHENLEYVLP (87 aa).

This sequence belongs to the bacterial microcompartments protein family. CcmK subfamily. In terms of assembly, homohexamer. Interacts preferentially with CcmK2 and CcmK4a rather than itself in vitro.

It is found in the carboxysome. Functionally, one of the shell proteins of the carboxysome, a polyhedral inclusion where RuBisCO (ribulose bisphosphate carboxylase, rbcL-rbcS) is sequestered. Assembles into hexamers which make sheets that form the facets of the polyhedral carboxysome. The hexamer central pore probably regulates metabolite flux. This Thermosynechococcus vestitus (strain NIES-2133 / IAM M-273 / BP-1) protein is Carboxysome shell protein CcmK1.